The primary structure comprises 961 residues: Copper-exporting P-type ATPase (961 aa).

2 consecutive HMA domains span residues 3 to 64 (QTTL…YQAT) and 69 to 130 (PDVE…YHAT). Cu(+)-binding residues include Cys14, Cys17, Cys80, and Cys83. Disordered stretches follow at residues 131-153 (QQGIDSPKTEPLTHSAQSQPESL) and 178-201 (VLPTNTALPTNTTSTTSTADTASA). Positions 142–151 (LTHSAQSQPE) are enriched in polar residues. An HMA 3 domain is found at 226–289 (ESVQLLLTGM…AVKNAGYGAE (64 aa)). Residues Cys237 and Cys240 each coordinate Cu(+). The next 5 helical transmembrane spans lie at 316–336 (AALGLLLGIPLMAWGLFGGSM), 345–365 (PWLIIGIITLLVMIFAGGHFY), 381–401 (TLVALGTGAAWIYSITVNIWP), 565–585 (AVFVPTVVVIAIVAGLIWYFF), and 592–612 (VYTLVVATTVLIIACPCALGL). Asp650 functions as the 4-aspartylphosphate intermediate in the catalytic mechanism. Mg(2+)-binding residues include Asp847 and Asp851. A run of 3 helical transmembrane segments spans residues 860 to 880 (VGIAMGGGSDIAIETAAITLM), 906 to 926 (LGAFFYNALGIPIAAGILYPF), and 928 to 948 (GTLLSPVVAGAAMALSSITVV).

Belongs to the cation transport ATPase (P-type) (TC 3.A.3) family. Type IB subfamily.

The protein resides in the cell membrane. It catalyses the reaction Cu(+)(in) + ATP + H2O = Cu(+)(out) + ADP + phosphate + H(+). Involved in copper export. The sequence is that of Copper-exporting P-type ATPase (copA) from Yersinia pestis.